A 118-amino-acid chain; its full sequence is NAD(P)H-quinone oxidoreductase subunit M (118 aa).

Belongs to the complex I NdhM subunit family. NDH-1 can be composed of about 15 different subunits; different subcomplexes with different compositions have been identified which probably have different functions.

The protein resides in the cellular thylakoid membrane. It carries out the reaction a plastoquinone + NADH + (n+1) H(+)(in) = a plastoquinol + NAD(+) + n H(+)(out). It catalyses the reaction a plastoquinone + NADPH + (n+1) H(+)(in) = a plastoquinol + NADP(+) + n H(+)(out). Its function is as follows. NDH-1 shuttles electrons from an unknown electron donor, via FMN and iron-sulfur (Fe-S) centers, to quinones in the respiratory and/or the photosynthetic chain. The immediate electron acceptor for the enzyme in this species is believed to be plastoquinone. Couples the redox reaction to proton translocation, and thus conserves the redox energy in a proton gradient. Cyanobacterial NDH-1 also plays a role in inorganic carbon-concentration. This chain is NAD(P)H-quinone oxidoreductase subunit M, found in Trichormus variabilis (strain ATCC 29413 / PCC 7937) (Anabaena variabilis).